We begin with the raw amino-acid sequence, 232 residues long: Early E1A protein (232 aa).

Residues 40-48 (PTLHDLFDV) are interaction with RB1 in competition with E2F1. Residues 69 to 84 (TDSSASTEADSGFSPL) show a composition bias toward low complexity. Positions 69 to 97 (TDSSASTEADSGFSPLSTPPVSPIPPHPT) are disordered. The span at 85–97 (STPPVSPIPPHPT) shows a compositional bias: pro residues. An LXCXE motif, interaction with host RB1 motif is present at residues 107–111 (LLCLE). A zinc finger lies at 146–164 (CLRCAFYQEQDDNALCGLC). Residues 175-232 (SAGAEEEDDEVIFVSAKPGGRKRSAATPCEPDGVSKRPCVPEPEQTEPLDLSLKPRPN) form a disordered region. Residues 222-226 (PLDLS) carry the PXDLS motif, CTBP-binding motif. The Nuclear localization signal signature appears at 228 to 232 (KPRPN).

It belongs to the adenoviridae E1A protein family. In terms of assembly, interacts with host UBE2I; this interaction interferes with polySUMOylation. Interacts with host RB1; this interaction induces the aberrant dissociation of RB1-E2F1 complex thereby disrupting the activity of RB1 and activating E2F1-regulated genes. Interacts with host ATF7; the interaction enhances ATF7-mediated viral transactivation activity which requires the zinc binding domains of both proteins. Isoform early E1A 32 kDa protein and isoform early E1A 26 kDa protein interact (via N-terminus) with CUL1 and E3 ubiquitin ligase RBX1; these interactions inhibit RBX1-CUL1-dependent elongation reaction of ubiquitin chains and attenuate ubiquitination of SCF(FBXW7) target proteins. Interacts (via PXLXP motif) with host ZMYND11/BS69 (via MYND-type zinc finger); this interaction inhibits E1A mediated transactivation. Interacts with host EP300; this interaction stimulates the acetylation of RB1 by recruiting EP300 and RB1 into a multimeric-protein complex. Interacts with host CTBP1 and CTBP2; this interaction seems to potentiate viral replication. Interacts with host DCAF7. Interacts with host DYRK1A. Interacts with host KPNA4; this interaction allows E1A import into the host nucleus. Interacts with host EP400; this interaction stabilizes MYC. Interacts with host TBP protein; this interaction probably disrupts the TBP-TATA complex.

Its subcellular location is the host nucleus. Plays a role in viral genome replication by driving entry of quiescent cells into the cell cycle. Stimulation of progression from G1 to S phase allows the virus to efficiently use the cellular DNA replicating machinery to achieve viral genome replication. E1A protein has both transforming and trans-activating activities. Induces the disassembly of the E2F1 transcription factor from RB1 by direct competition for the same binding site on RB1, with subsequent transcriptional activation of E2F1-regulated S-phase genes and of the E2 region of the adenoviral genome. Release of E2F1 leads to the ARF-mediated inhibition of MDM2 and causes TP53/p53 to accumulate because it is not targeted for degradation by MDM2-mediated ubiquitination anymore. This increase in TP53, in turn, would arrest the cell proliferation and direct its death but this effect is counteracted by the viral protein E1B-55K. Inactivation of the ability of RB1 to arrest the cell cycle is critical for cellular transformation, uncontrolled cellular growth and proliferation induced by viral infection. Interaction with RBX1 and CUL1 inhibits ubiquitination of the proteins targeted by SCF(FBXW7) ubiquitin ligase complex, and may be linked to unregulated host cell proliferation. The tumorigenesis-restraining activity of E1A may be related to the disruption of the host CtBP-CtIP complex through the CtBP binding motif. The chain is Early E1A protein from Canine adenovirus serotype 2 (strain Toronto A 26-61) (CAdV-2).